The following is a 198-amino-acid chain: Putative 3-methyladenine DNA glycosylase (198 aa).

Belongs to the DNA glycosylase MPG family.

This chain is Putative 3-methyladenine DNA glycosylase, found in Rhizobium johnstonii (strain DSM 114642 / LMG 32736 / 3841) (Rhizobium leguminosarum bv. viciae).